The chain runs to 121 residues: Large ribosomal subunit protein uL14c (121 aa).

Belongs to the universal ribosomal protein uL14 family. In terms of assembly, part of the 50S ribosomal subunit.

It localises to the plastid. The protein localises to the chloroplast. Its function is as follows. Binds to 23S rRNA. The sequence is that of Large ribosomal subunit protein uL14c from Euglena gracilis.